Consider the following 265-residue polypeptide: Probable S-methyl-5'-thioinosine phosphorylase (265 aa).

Phosphate is bound by residues Ser15 and 55-56 (RH). Met187 lines the substrate pocket. Residue Thr188 coordinates phosphate. Residue 211–213 (NYA) coordinates substrate.

It belongs to the PNP/MTAP phosphorylase family. MTAP subfamily. In terms of assembly, homotrimer.

It catalyses the reaction S-methyl-5'-thioinosine + phosphate = 5-(methylsulfanyl)-alpha-D-ribose 1-phosphate + hypoxanthine. It functions in the pathway purine metabolism; purine nucleoside salvage. In terms of biological role, catalyzes the reversible phosphorylation of S-methyl-5'-thioinosine (MTI) to hypoxanthine and 5-methylthioribose-1-phosphate. Involved in the breakdown of S-methyl-5'-thioadenosine (MTA), a major by-product of polyamine biosynthesis. Catabolism of (MTA) occurs via deamination to MTI and phosphorolysis to hypoxanthine. The sequence is that of Probable S-methyl-5'-thioinosine phosphorylase from Thermodesulfovibrio yellowstonii (strain ATCC 51303 / DSM 11347 / YP87).